The chain runs to 501 residues: Actin nucleation-promoting factor WASL (501 aa).

An N-acetylserine modification is found at Ser-2. The 108-residue stretch at 31–138 folds into the WH1 domain; that stretch reads LGKKCVTMSS…KAVTDLLGRR (108 aa). Residues 135-158 are disordered; that stretch reads LGRRQRKSEKRRDAPNGPNLPMAT. Residues 200 to 213 enclose the CRIB domain; that stretch reads IGTPSNFQHIGHVG. At Ser-239 the chain carries Phosphoserine; by TNK2. Tyr-253 is subject to Phosphotyrosine; by FAK1 and TNK2. Disordered regions lie at residues 263-403 and 442-501; these read EAVK…GNKA and QLKS…EWED. A compositionally biased stretch (pro residues) spans 273–387; sequence APPPPPPSRG…PPGPPPPPGL (115 aa). At Arg-304 the chain carries Omega-N-methylarginine. WH2 domains lie at 401–418 and 429–446; these read NKAA…LKKV and GRDA…LKSV. Residues 442–453 are compositionally biased toward polar residues; the sequence is QLKSVSDGQEST. Residues Ser-480 and Ser-481 each carry the phosphoserine modification. Residues 482–501 show a composition bias toward acidic residues; sequence DEDEDDDDEEDFEDDDEWED.

Binds actin and the Arp2/3 complex. Interacts with CDC42. Interacts with FCHSD1. Interacts with FCHSD2. Binds to SH3 domains of GRB2. Interacts with the C-terminal SH3 domain of DNMBP. Interacts with SNX9. Interacts with the WW domains of PRPF40A/FBP11. Interacts with PTK2/FAK1. Interacts with PACSIN1, PACSIN2 and PACSIN3. Interacts with NOSTRIN. Binds to TNK2. Interacts with SNX33. Interacts with NONO (via second RRM domain); the interaction is direct. Component of a multiprotein complex with NONO and SFPQ; associates with the complex via direct interaction with NONO. In terms of processing, phosphorylation at Ser-239, Tyr-253, Ser-480 and Ser-481 enhances actin polymerization activity.

The protein resides in the cytoplasm. It is found in the cytoskeleton. Its subcellular location is the nucleus. Functionally, regulates actin polymerization by stimulating the actin-nucleating activity of the Arp2/3 complex. Involved in various processes, such as mitosis and cytokinesis, via its role in the regulation of actin polymerization. Together with CDC42, involved in the extension and maintenance of the formation of thin, actin-rich surface projections called filopodia. In addition to its role in the cytoplasm, also plays a role in the nucleus by regulating gene transcription, probably by promoting nuclear actin polymerization. Binds to HSF1/HSTF1 and forms a complex on heat shock promoter elements (HSE) that negatively regulates HSP90 expression. Plays a role in dendrite spine morphogenesis. This is Actin nucleation-promoting factor WASL (Wasl) from Mus musculus (Mouse).